Reading from the N-terminus, the 407-residue chain is Phosphopentomutase (407 aa).

Positions 10, 306, 311, 347, 348, and 359 each coordinate Mn(2+).

It belongs to the phosphopentomutase family. Requires Mn(2+) as cofactor.

It is found in the cytoplasm. The catalysed reaction is 2-deoxy-alpha-D-ribose 1-phosphate = 2-deoxy-D-ribose 5-phosphate. The enzyme catalyses alpha-D-ribose 1-phosphate = D-ribose 5-phosphate. It functions in the pathway carbohydrate degradation; 2-deoxy-D-ribose 1-phosphate degradation; D-glyceraldehyde 3-phosphate and acetaldehyde from 2-deoxy-alpha-D-ribose 1-phosphate: step 1/2. Isomerase that catalyzes the conversion of deoxy-ribose 1-phosphate (dRib-1-P) and ribose 1-phosphate (Rib-1-P) to deoxy-ribose 5-phosphate (dRib-5-P) and ribose 5-phosphate (Rib-5-P), respectively. The polypeptide is Phosphopentomutase (Buchnera aphidicola subsp. Acyrthosiphon pisum (strain 5A)).